A 247-amino-acid chain; its full sequence is Phosphonates import ATP-binding protein PhnC (247 aa).

The region spanning 5–246 (IEVKNLVKNY…EDDIRKVYQT (242 aa)) is the ABC transporter domain. ATP is bound at residue 37–44 (GESGAGKS).

Belongs to the ABC transporter superfamily. Phosphonates importer (TC 3.A.1.9.1) family. The complex is composed of two ATP-binding proteins (PhnC), two transmembrane proteins (PhnE) and a solute-binding protein (PhnD).

It localises to the cell inner membrane. The catalysed reaction is phosphonate(out) + ATP + H2O = phosphonate(in) + ADP + phosphate + H(+). Functionally, part of the ABC transporter complex PhnCDE involved in phosphonates import. Responsible for energy coupling to the transport system. The polypeptide is Phosphonates import ATP-binding protein PhnC (Fusobacterium nucleatum subsp. nucleatum (strain ATCC 25586 / DSM 15643 / BCRC 10681 / CIP 101130 / JCM 8532 / KCTC 2640 / LMG 13131 / VPI 4355)).